A 321-amino-acid polypeptide reads, in one-letter code: uncharacterized protein (321 aa).

The span at 1–12 (MQGGREVGRESV) shows a compositional bias: basic and acidic residues. The interval 1 to 85 (MQGGREVGRE…GWGEFEGFQE (85 aa)) is disordered. The span at 53-67 (NANSSRLDEGLSSSR) shows a compositional bias: polar residues.

This is an uncharacterized protein from Rattus norvegicus (Rat).